A 250-amino-acid polypeptide reads, in one-letter code: Cellulose biosynthesis protein BcsQ (250 aa).

Residue 9-16 (VRGGVGTT) participates in ATP binding.

It belongs to the BcsQ family.

It localises to the cytoplasm. Essential for cellulose biosynthesis, shown for strain 1094, a commensal, natural cellulose producer. Also shown in strain W3110 which has a restored reading frame (TAG stop codon to TTG for amino acid 6, called strain AR3110), this protein. May play a role in subcellular localization of an active cellulose biosynthesis apparatus at the bacterial cell pole. The combination of cellulose and the curli fiber network confer cohesion, elasticity and tissue-like properties to colonies. This Escherichia coli (strain K12) protein is Cellulose biosynthesis protein BcsQ.